A 230-amino-acid polypeptide reads, in one-letter code: Large ribosomal subunit protein uL1 (230 aa).

This sequence belongs to the universal ribosomal protein uL1 family. In terms of assembly, part of the 50S ribosomal subunit.

In terms of biological role, binds directly to 23S rRNA. The L1 stalk is quite mobile in the ribosome, and is involved in E site tRNA release. Functionally, protein L1 is also a translational repressor protein, it controls the translation of the L11 operon by binding to its mRNA. This chain is Large ribosomal subunit protein uL1, found in Rhodopseudomonas palustris (strain BisA53).